The following is a 247-amino-acid chain: tRNA pseudouridine synthase A (247 aa).

The active-site Nucleophile is the Asp-53. Substrate is bound at residue Tyr-111.

It belongs to the tRNA pseudouridine synthase TruA family. Homodimer.

The catalysed reaction is uridine(38/39/40) in tRNA = pseudouridine(38/39/40) in tRNA. Functionally, formation of pseudouridine at positions 38, 39 and 40 in the anticodon stem and loop of transfer RNAs. The sequence is that of tRNA pseudouridine synthase A from Lacticaseibacillus casei (strain BL23) (Lactobacillus casei).